We begin with the raw amino-acid sequence, 638 residues long: Threonine--tRNA ligase (638 aa).

One can recognise a TGS domain in the interval 1 to 61; that stretch reads MPKITLPDGT…KNDSKVVIIT (61 aa). The segment at 242 to 533 is catalytic; it reads DHRKLGKKHS…LIEQYEAKFP (292 aa). Zn(2+) is bound by residues C333, H384, and H510.

Belongs to the class-II aminoacyl-tRNA synthetase family. Homodimer. Requires Zn(2+) as cofactor.

Its subcellular location is the cytoplasm. It catalyses the reaction tRNA(Thr) + L-threonine + ATP = L-threonyl-tRNA(Thr) + AMP + diphosphate + H(+). Catalyzes the attachment of threonine to tRNA(Thr) in a two-step reaction: L-threonine is first activated by ATP to form Thr-AMP and then transferred to the acceptor end of tRNA(Thr). Also edits incorrectly charged L-seryl-tRNA(Thr). This chain is Threonine--tRNA ligase, found in Prochlorococcus marinus (strain MIT 9515).